The primary structure comprises 367 residues: MIRRWLVIFILFPLQLIEKCESTVDFSVPPIVKLEKGSSTSVSISLPRPLNATLVITFEITFRSKNVTILQLPDEVVVPPGTTNSSFRVTSQSVGQVTTYLHGNHSNQTSPRIRFLVIHSNIVSIINQVIGWIYFVAWSVSFYPQVITNWRRKSVVGLSFDFVVLNLMGFVAYSVFNIGLFWVPSIKEQFLLKYPNGVNPVDSNDVFFSLHAVALTLVVIVQCLLYERGSQRVSWLAISFLVLSWLFTLIALIMAAVGATTWLQFLFCFSYIKLAVTLVKYFPQAYMNFHYKSTEGWSIGNVLLDFTGGSFSLLQMFLQSYNNDQWTLIFGDPTKFGLGIFSIIFDVVFFIQHFCLYRKKPGYDQLN.

The signal sequence occupies residues 1 to 22; sequence MIRRWLVIFILFPLQLIEKCES. The Lumenal segment spans residues 23–125; sequence TVDFSVPPIV…LVIHSNIVSI (103 aa). N-linked (GlcNAc...) asparagine glycans are attached at residues Asn-51, Asn-66, Asn-84, Asn-104, and Asn-107. The PQ-loop 1 domain occupies 123–189; that stretch reads VSIINQVIGW…LFWVPSIKEQ (67 aa). A helical transmembrane segment spans residues 126 to 150; it reads INQVIGWIYFVAWSVSFYPQVITNW. The Cytoplasmic segment spans residues 151-159; it reads RRKSVVGLS. The chain crosses the membrane as a helical span at residues 160–179; sequence FDFVVLNLMGFVAYSVFNIG. An L-cystine-binding site is contributed by Asn-166. Topologically, residues 180 to 202 are lumenal; that stretch reads LFWVPSIKEQFLLKYPNGVNPVD. A helical transmembrane segment spans residues 203–225; the sequence is SNDVFFSLHAVALTLVVIVQCLL. Asp-205 lines the H(+) pocket. At 226–234 the chain is on the cytoplasmic side; it reads YERGSQRVS. The helical transmembrane segment at 235–257 threads the bilayer; that stretch reads WLAISFLVLSWLFTLIALIMAAV. Residues 258–263 are Lumenal-facing; the sequence is GATTWL. Residues 263-328 form the PQ-loop 2 domain; sequence LQFLFCFSYI…QSYNNDQWTL (66 aa). The chain crosses the membrane as a helical span at residues 264–289; that stretch reads QFLFCFSYIKLAVTLVKYFPQAYMNF. 3 residues coordinate L-cystine: Lys-273, Lys-280, and Tyr-281. The Cytoplasmic portion of the chain corresponds to 290–298; that stretch reads HYKSTEGWS. Residues 299 to 308 traverse the membrane as a helical segment; the sequence is IGNVLLDFTG. L-cystine contacts are provided by Asn-301 and Asp-305. Residue Asp-305 participates in H(+) binding. Topologically, residues 309–331 are lumenal; sequence GSFSLLQMFLQSYNNDQWTLIFG. The helical transmembrane segment at 332-354 threads the bilayer; the sequence is DPTKFGLGIFSIIFDVVFFIQHF. Asp-346 provides a ligand contact to H(+). Topologically, residues 355–367 are cytoplasmic; sequence CLYRKKPGYDQLN. A Lysosomal targeting motif motif is present at residues 362–366; it reads GYDQL.

It belongs to the cystinosin family. In terms of assembly, interacts with components of the V-ATPase complex. Interacts with components of the Ragulator complex. Interacts with RRAGA/RagA and RRAGC/RagC. Interacts with AP-3 complex subunit mu (AP3M1 or AP3M2).

It is found in the lysosome membrane. The protein resides in the melanosome membrane. It catalyses the reaction L-cystine(out) + H(+)(out) = L-cystine(in) + H(+)(in). Switches between a lumen- and a cytosol-open conformation: pH induces conformational changes and shifts the equilibrium to facilitate the transition between the lumen- and cytosol-open conformation, thereby promoting cystine transport. Protonation of specific aspartate residues (Asp-205, Asp-305 and Asp-346) favors the cytosol-open conformation. In terms of biological role, cystine/H(+) symporter that mediates export of cystine, the oxidized dimer of cysteine, from lysosomes. Plays an important role in melanin synthesis by catalyzing cystine export from melanosomes, possibly by inhibiting pheomelanin synthesis. In addition to cystine export, also acts as a positive regulator of mTORC1 signaling in kidney proximal tubular cells, via interactions with components of the v-ATPase and Ragulator complexes. Also involved in small GTPase-regulated vesicle trafficking and lysosomal localization of LAMP2A, independently of cystine transporter activity. The polypeptide is Cystinosin (Bos taurus (Bovine)).